The chain runs to 683 residues: Leishmanolysin-like peptidase (683 aa).

His-257 is a binding site for Zn(2+). Glu-258 is an active-site residue. Zn(2+)-binding residues include His-261 and His-364.

It belongs to the peptidase M8 family. Zn(2+) serves as cofactor.

The protein localises to the cytoplasm. Essential for the coordination of mitotic progression, and also plays a role in cell migration. In Drosophila melanogaster (Fruit fly), this protein is Leishmanolysin-like peptidase (Invadolysin).